The primary structure comprises 342 residues: Oxygen-dependent coproporphyrinogen-III oxidase (342 aa).

S98 is a binding site for substrate. Positions 102 and 112 each coordinate a divalent metal cation. The Proton donor role is filled by H112. Residue 114 to 116 (NYR) coordinates substrate. Residues H146 and H176 each coordinate a divalent metal cation. Residues 266-301 (YVEFNLVWDRGTIFGLQTNGRTESILMSLPPLARWE) are important for dimerization.

Belongs to the aerobic coproporphyrinogen-III oxidase family. As to quaternary structure, homodimer. Requires a divalent metal cation as cofactor.

It is found in the cytoplasm. It carries out the reaction coproporphyrinogen III + O2 + 2 H(+) = protoporphyrinogen IX + 2 CO2 + 2 H2O. Its pathway is porphyrin-containing compound metabolism; protoporphyrin-IX biosynthesis; protoporphyrinogen-IX from coproporphyrinogen-III (O2 route): step 1/1. Functionally, involved in the heme and chlorophyll biosynthesis. Catalyzes the aerobic oxidative decarboxylation of propionate groups of rings A and B of coproporphyrinogen-III to yield the vinyl groups in protoporphyrinogen-IX. This Prochlorococcus marinus subsp. pastoris (strain CCMP1986 / NIES-2087 / MED4) protein is Oxygen-dependent coproporphyrinogen-III oxidase.